The following is a 358-amino-acid chain: Mannonate dehydratase (358 aa).

It belongs to the mannonate dehydratase family. The cofactor is Fe(2+). Requires Mn(2+) as cofactor.

The catalysed reaction is D-mannonate = 2-dehydro-3-deoxy-D-gluconate + H2O. It functions in the pathway carbohydrate metabolism; pentose and glucuronate interconversion. In terms of biological role, catalyzes the dehydration of D-mannonate. This chain is Mannonate dehydratase, found in Lactococcus lactis subsp. cremoris (strain MG1363).